The chain runs to 121 residues: Large ribosomal subunit protein bL12 (121 aa).

Belongs to the bacterial ribosomal protein bL12 family. Homodimer. Part of the ribosomal stalk of the 50S ribosomal subunit. Forms a multimeric L10(L12)X complex, where L10 forms an elongated spine to which 2 to 4 L12 dimers bind in a sequential fashion. Binds GTP-bound translation factors.

Its function is as follows. Forms part of the ribosomal stalk which helps the ribosome interact with GTP-bound translation factors. Is thus essential for accurate translation. In Ureaplasma parvum serovar 3 (strain ATCC 27815 / 27 / NCTC 11736), this protein is Large ribosomal subunit protein bL12.